The chain runs to 836 residues: Outer membrane usher protein PapC (836 aa).

The signal sequence occupies residues 1–24; it reads MKDRIPFAVNNITCVILLSLFCNA. Cysteines 814 and 832 form a disulfide.

The protein belongs to the fimbrial export usher family.

The protein resides in the cell outer membrane. Involved in the export and assembly of pili subunits across the outer membrane. Forms a hexameric ring-shaped pore in the outer bacterial membrane. The 2 nanometer-diameter pore allows the passage of the thin tip fibrillum. As for the rod, it probably unwinds into linear fibers which would therefore be narrow enough to pass through the pore. The chain is Outer membrane usher protein PapC (papC) from Escherichia coli.